The primary structure comprises 134 residues: Small ribosomal subunit protein uS11 (134 aa).

The protein belongs to the universal ribosomal protein uS11 family. As to quaternary structure, component of the small ribosomal subunit.

It localises to the cytoplasm. This is Small ribosomal subunit protein uS11 (RPS14) from Encephalitozoon cuniculi (strain GB-M1) (Microsporidian parasite).